The following is a 208-amino-acid chain: MTLQTFTSTDFEVFTVDGLEERMSAIKTNIHPKLEALGEQFAEYLSQQTDESFFYHVAKHARRKVNPPNDTWVAFSTNKRGYKMLPHFQIGLWGTHAFIYFGLIYECPQKVETAHAFLEHLNDLKTNIPNDFVWSIDHTKPGVKLHKTLETEDLQKMIERLATVKKAELLVGIHISPEEFSAMTNEQFLAKIESTMQPLLPLYALCNR.

It belongs to the UPF0637 family.

The polypeptide is UPF0637 protein BcerKBAB4_3786 (Bacillus mycoides (strain KBAB4) (Bacillus weihenstephanensis)).